A 506-amino-acid polypeptide reads, in one-letter code: Heat stress transcription factor A-1 (506 aa).

A coiled-coil region spans residues 157–207 (MEEEIEMLKRDKNVLMQELVRLRQQQQTTDHQLQTLGKRLQGMEQRQQQMM). Positions 164 to 214 (LKRDKNVLMQELVRLRQQQQTTDHQLQTLGKRLQGMEQRQQQMMSFLAKAM) are hydrophobic repeat HR-A/B. Residues 231–254 (RRRIVASNKKRRLPKQDGSLDSES) form a disordered region. Over residues 232–243 (RRIVASNKKRRL) the composition is skewed to basic residues. Residues 239–242 (KKRR) carry the Nuclear localization signal motif. The AHA motif lies at 449-456 (DSFWEQFL).

It belongs to the HSF family. Class A subfamily. In terms of assembly, homotrimer. In terms of processing, exhibits temperature-dependent phosphorylation.

It localises to the nucleus. Transcriptional regulator that specifically binds DNA of heat shock promoter elements (HSE). The chain is Heat stress transcription factor A-1 (HSFA1) from Oryza sativa subsp. japonica (Rice).